The sequence spans 69 residues: MSVLTPLLLRGLTGSARRLPVPRAQVHSMPPEQKLGVLELAIGFTSCLVTFLLPAGWILSHLDSYKKRG.

The N-terminal 25 residues, Met1–Gln25, are a transit peptide targeting the mitochondrion. Positions Ser2–Leu19 match the SIFI-degron motif. Residues Val26–Gly36 are Mitochondrial matrix-facing. The chain crosses the membrane as a helical span at residues Val37–Ser60. The Mitochondrial intermembrane segment spans residues His61 to Gly69.

This sequence belongs to the cytochrome c oxidase VIII family. Component of the cytochrome c oxidase (complex IV, CIV), a multisubunit enzyme composed of 14 subunits. The complex is composed of a catalytic core of 3 subunits MT-CO1, MT-CO2 and MT-CO3, encoded in the mitochondrial DNA, and 11 supernumerary subunits COX4I, COX5A, COX5B, COX6A, COX6B, COX6C, COX7A, COX7B, COX7C, COX8 and NDUFA4, which are encoded in the nuclear genome. The complex exists as a monomer or a dimer and forms supercomplexes (SCs) in the inner mitochondrial membrane with NADH-ubiquinone oxidoreductase (complex I, CI) and ubiquinol-cytochrome c oxidoreductase (cytochrome b-c1 complex, complex III, CIII), resulting in different assemblies (supercomplex SCI(1)III(2)IV(1) and megacomplex MCI(2)III(2)IV(2)). Post-translationally, in response to mitochondrial stress, the precursor protein is ubiquitinated by the SIFI complex in the cytoplasm before mitochondrial import, leading to its degradation. Within the SIFI complex, UBR4 initiates ubiquitin chain that are further elongated or branched by KCMF1.

Its subcellular location is the mitochondrion inner membrane. The protein operates within energy metabolism; oxidative phosphorylation. In terms of biological role, component of the cytochrome c oxidase, the last enzyme in the mitochondrial electron transport chain which drives oxidative phosphorylation. The respiratory chain contains 3 multisubunit complexes succinate dehydrogenase (complex II, CII), ubiquinol-cytochrome c oxidoreductase (cytochrome b-c1 complex, complex III, CIII) and cytochrome c oxidase (complex IV, CIV), that cooperate to transfer electrons derived from NADH and succinate to molecular oxygen, creating an electrochemical gradient over the inner membrane that drives transmembrane transport and the ATP synthase. Cytochrome c oxidase is the component of the respiratory chain that catalyzes the reduction of oxygen to water. Electrons originating from reduced cytochrome c in the intermembrane space (IMS) are transferred via the dinuclear copper A center (CU(A)) of subunit 2 and heme A of subunit 1 to the active site in subunit 1, a binuclear center (BNC) formed by heme A3 and copper B (CU(B)). The BNC reduces molecular oxygen to 2 water molecules using 4 electrons from cytochrome c in the IMS and 4 protons from the mitochondrial matrix. In Saimiri sciureus (Common squirrel monkey), this protein is Cytochrome c oxidase subunit 8A, mitochondrial (COX8A).